A 923-amino-acid polypeptide reads, in one-letter code: MPFAIGQRWLSESENALGLGVITALDQRTVTIYFPAADETRIYAIAQAPLSRIVFSKGETLSHQAGWQGEILDVQNMNGLLFYLVKNPQDEDVIVQERDISPIISFSQAKDRLFSAQIDRSTHFALRYRTLCHQQAQFKSPLRGLRGTRAGLIPHQLHIAAEVGNRVNPRVLLADEVGLGKTIEAGMILQNQLFAEKVQRVLIIVPETLQHQWLVEMLRRFNLHFALFDEERCNDFDLDAVNPFTTESLIICSLNWLETHPNRVEQALDAQFDCLIVDEAHHLVWSETSPSAAYLFVEQLARIIPSVLLLTATPEQLGQESHFARLRLLDPERFFDYQTFVKEQEHYQPVVNAVESLLANKALSAVEKNHISDLLLEQDVEPLFKAIASNNDEEQQRARQELIQALIDRHGTGRMLFRNTRQGVKGFPHRVYHQITLSEENDKIDWLIDFLKLHRDEKIFVICQTAATAIQLEQILREREAIRAAVFHEKMSIIERDRAAAYFADLENGAQVLLSSSIGSEGRNFQFAANLVLFDLPTNPDLLEQCIGRLDRIGQKRDVQIYMPCAKDSPQSRLARWYNEGLNAFEQTCPMGMALFSQFADELEKVRSNSTALSENEFSGLLKQTKTAREKLKIELEKGRDRLLELNSHGGEQAQALADQIADEDNSPELVNFALKLFDIIGVEQEDLGANSIVISPTGTMLVPDFPGLKEEGVTVTFDRELALAREEMEFLTWDHPMIRQGIDLVASGDIGKAAMALLVNKQLPAGTLLIELIYVVESQSPKGLQLNRFLPPTPIRLLLDNKGNNMGEQVAFETLHSKLKPLGKNIANQMVKMARSNIESLITRGDQLVKSLAEPIIAEAKNQADQQLSAEINRLQALRAVNKNIRQSEIDILEQQRTQSLDELSKANWRLDCLRVIVTNKE.

One can recognise a Helicase ATP-binding domain in the interval 162-332 (EVGNRVNPRV…FARLRLLDPE (171 aa)). 175-182 (DEVGLGKT) lines the ATP pocket. Positions 278 to 281 (DEAH) match the DEAH box motif. The Helicase C-terminal domain occupies 443–597 (KIDWLIDFLK…TCPMGMALFS (155 aa)).

The protein belongs to the SNF2/RAD54 helicase family. RapA subfamily. As to quaternary structure, interacts with the RNAP. Has a higher affinity for the core RNAP than for the holoenzyme. Its ATPase activity is stimulated by binding to RNAP.

In terms of biological role, transcription regulator that activates transcription by stimulating RNA polymerase (RNAP) recycling in case of stress conditions such as supercoiled DNA or high salt concentrations. Probably acts by releasing the RNAP, when it is trapped or immobilized on tightly supercoiled DNA. Does not activate transcription on linear DNA. Probably not involved in DNA repair. The protein is RNA polymerase-associated protein RapA of Haemophilus influenzae (strain PittEE).